The sequence spans 137 residues: Large ribosomal subunit protein uL16 (137 aa).

This sequence belongs to the universal ribosomal protein uL16 family. As to quaternary structure, part of the 50S ribosomal subunit.

Binds 23S rRNA and is also seen to make contacts with the A and possibly P site tRNAs. The chain is Large ribosomal subunit protein uL16 from Leuconostoc citreum (strain KM20).